We begin with the raw amino-acid sequence, 28 residues long: Alkaline serine protease NJP (28 aa).

With respect to regulation, inhibited by PMSF. Not or very weakly inhibited by EDTA, EGTA, beta-mercaptoethanol, benzamidine, aprotinin, iodoacetic acid, pepstatin A and SBTI. Functionally, alkaline thrombin-like serine protease. Has fibrinolytic and fibrinogenolytic but not plasminogenolytic activity. Cleaves fibrinogen chains Aalpha, Bbeta and gamma chains in that order. Cleaves after Arg and Lys residues. The polypeptide is Alkaline serine protease NJP (Hediste japonica (Polychaete worm)).